A 364-amino-acid chain; its full sequence is Fructose-bisphosphate aldolase B (364 aa).

An N-acetylalanine modification is found at Ala-2. Residue Lys-13 is modified to N6-succinyllysine. At Ser-36 the chain carries Phosphoserine. At Thr-39 the chain carries Phosphothreonine. Arg-43 lines the beta-D-fructose 1,6-bisphosphate pocket. Position 119 is a phosphothreonine (Thr-119). Lys-121 carries the N6-succinyllysine modification. At Ser-132 the chain carries Phosphoserine. The active-site Proton acceptor is the Glu-188. The active-site Schiff-base intermediate with dihydroxyacetone-P is Lys-230. Ser-272, Ser-276, Ser-299, and Ser-301 each carry phosphoserine. Residue 272–274 (SGG) coordinates beta-D-fructose 1,6-bisphosphate. Arg-304 lines the beta-D-fructose 1,6-bisphosphate pocket. Ser-309 is subject to Phosphoserine. N6-succinyllysine is present on Lys-317.

This sequence belongs to the class I fructose-bisphosphate aldolase family. In terms of assembly, homotetramer. Interacts with BBS1, BBS2, BBS4 and BBS7. Forms a ternary complex with G6PD and TP53; this interaction is direct.

Its subcellular location is the cytoplasm. It is found in the cytosol. The protein resides in the cytoskeleton. It localises to the microtubule organizing center. The protein localises to the centrosome. Its subcellular location is the centriolar satellite. The enzyme catalyses beta-D-fructose 1,6-bisphosphate = D-glyceraldehyde 3-phosphate + dihydroxyacetone phosphate. It catalyses the reaction beta-D-fructose 1-phosphate = D-glyceraldehyde + dihydroxyacetone phosphate. It functions in the pathway carbohydrate degradation; glycolysis; D-glyceraldehyde 3-phosphate and glycerone phosphate from D-glucose: step 4/4. The protein operates within carbohydrate biosynthesis; gluconeogenesis. Its pathway is carbohydrate metabolism; fructose metabolism. Catalyzes the aldol cleavage of fructose 1,6-biphosphate to form two triosephosphates dihydroxyacetone phosphate and D-glyceraldehyde 3-phosphate in glycolysis as well as the reverse stereospecific aldol addition reaction in gluconeogenesis. In fructolysis, metabolizes fructose 1-phosphate derived from the phosphorylation of dietary fructose by fructokinase into dihydroxyacetone phosphate and D-glyceraldehyde. Acts as an adapter independently of its enzymatic activity, exerts a tumor suppressor role by stabilizing the ternary complex with G6PD and TP53 to inhibit G6PD activity and keep oxidative pentose phosphate metabolism in check. The polypeptide is Fructose-bisphosphate aldolase B (ALDOB) (Bos taurus (Bovine)).